Reading from the N-terminus, the 114-residue chain is UPF0342 protein NWMN_1737 (114 aa).

The protein belongs to the UPF0342 family.

The protein is UPF0342 protein NWMN_1737 of Staphylococcus aureus (strain Newman).